Consider the following 334-residue polypeptide: F-box protein AUF1 (334 aa).

The 49-residue stretch at 1 to 49 (MDAFDAIPDPVVIDILNRVGDVKTLIRCRSVSKRFNSLATQSESLLLQL) folds into the F-box domain.

In terms of assembly, part of a SCF (ASK-cullin-F-box) protein ligase complex. Interacts with SKP1A/ASK1, SKP1B/ASK2, ASK11 and ASK13.

The protein resides in the nucleus. Its pathway is protein modification; protein ubiquitination. Functionally, component of SCF(ASK-cullin-F-box) E3 ubiquitin ligase complexes, which may mediate the ubiquitination and subsequent proteasomal degradation of target proteins. Involved in the control of basipetal and acropetal auxin transport by promoting the distribution and expression of the auxin transporter PIN2. Promotes cytokinin-mediated cell expansion in the root elongation and differentiation zone, without affecting root cell division. The polypeptide is F-box protein AUF1 (Arabidopsis thaliana (Mouse-ear cress)).